Reading from the N-terminus, the 408-residue chain is Imidazolonepropionase (408 aa).

His-73 and His-75 together coordinate Fe(3+). The Zn(2+) site is built by His-73 and His-75. Positions 82, 145, and 178 each coordinate 4-imidazolone-5-propanoate. Tyr-145 contacts N-formimidoyl-L-glutamate. His-243 is a binding site for Fe(3+). Position 243 (His-243) interacts with Zn(2+). Gln-246 contributes to the 4-imidazolone-5-propanoate binding site. Residue Asp-318 coordinates Fe(3+). Zn(2+) is bound at residue Asp-318. N-formimidoyl-L-glutamate is bound by residues Asn-320 and Gly-322. Position 323 (Ser-323) interacts with 4-imidazolone-5-propanoate.

This sequence belongs to the metallo-dependent hydrolases superfamily. HutI family. Zn(2+) serves as cofactor. It depends on Fe(3+) as a cofactor.

Its subcellular location is the cytoplasm. It catalyses the reaction 4-imidazolone-5-propanoate + H2O = N-formimidoyl-L-glutamate. It functions in the pathway amino-acid degradation; L-histidine degradation into L-glutamate; N-formimidoyl-L-glutamate from L-histidine: step 3/3. Its function is as follows. Catalyzes the hydrolytic cleavage of the carbon-nitrogen bond in imidazolone-5-propanoate to yield N-formimidoyl-L-glutamate. It is the third step in the universal histidine degradation pathway. The polypeptide is Imidazolonepropionase (Shewanella sp. (strain ANA-3)).